Reading from the N-terminus, the 271-residue chain is 3-methyl-2-oxobutanoate hydroxymethyltransferase 1 (271 aa).

The Mg(2+) site is built by Asp53 and Asp92. 3-methyl-2-oxobutanoate-binding positions include 53-54 (DS), Asp92, and Lys120. A Mg(2+)-binding site is contributed by Glu122. Glu189 serves as the catalytic Proton acceptor.

This sequence belongs to the PanB family. Homodecamer; pentamer of dimers. Requires Mg(2+) as cofactor.

The protein localises to the cytoplasm. It carries out the reaction 3-methyl-2-oxobutanoate + (6R)-5,10-methylene-5,6,7,8-tetrahydrofolate + H2O = 2-dehydropantoate + (6S)-5,6,7,8-tetrahydrofolate. Its pathway is cofactor biosynthesis; (R)-pantothenate biosynthesis; (R)-pantoate from 3-methyl-2-oxobutanoate: step 1/2. Catalyzes the reversible reaction in which hydroxymethyl group from 5,10-methylenetetrahydrofolate is transferred onto alpha-ketoisovalerate to form ketopantoate. The sequence is that of 3-methyl-2-oxobutanoate hydroxymethyltransferase 1 from Burkholderia cenocepacia (strain HI2424).